The primary structure comprises 393 residues: NAD(P)H-quinone oxidoreductase subunit H, chloroplastic (393 aa).

This sequence belongs to the complex I 49 kDa subunit family. In terms of assembly, NDH is composed of at least 16 different subunits, 5 of which are encoded in the nucleus.

The protein localises to the plastid. Its subcellular location is the chloroplast thylakoid membrane. The enzyme catalyses a plastoquinone + NADH + (n+1) H(+)(in) = a plastoquinol + NAD(+) + n H(+)(out). It carries out the reaction a plastoquinone + NADPH + (n+1) H(+)(in) = a plastoquinol + NADP(+) + n H(+)(out). Functionally, NDH shuttles electrons from NAD(P)H:plastoquinone, via FMN and iron-sulfur (Fe-S) centers, to quinones in the photosynthetic chain and possibly in a chloroplast respiratory chain. The immediate electron acceptor for the enzyme in this species is believed to be plastoquinone. Couples the redox reaction to proton translocation, and thus conserves the redox energy in a proton gradient. In Ranunculus macranthus (Large buttercup), this protein is NAD(P)H-quinone oxidoreductase subunit H, chloroplastic.